Reading from the N-terminus, the 792-residue chain is Cis-abienol synthase, chloroplastic (792 aa).

The transit peptide at 1–37 directs the protein to the chloroplast; that stretch reads MVLGLRSKIIPLPDHKLGNIKLGSVTNAICHRPCRVR. Positions 539, 543, 684, and 692 each coordinate Mg(2+). The DDXXD motif signature appears at 539-543; sequence DDFFD.

The protein belongs to the terpene synthase family. The cofactor is Mg(2+). As to expression, expressed specifically in trichomes.

The protein localises to the plastid. It localises to the chloroplast. The enzyme catalyses 8-hydroxycopalyl diphosphate = cis-abienol + diphosphate. The protein operates within secondary metabolite biosynthesis; terpenoid biosynthesis. Its function is as follows. Involved in the biosynthesis of cis-abienol, a labdane diterpene that can be used as synthesis precursor of ambergris substitution fragance products. This is Cis-abienol synthase, chloroplastic from Nicotiana tabacum (Common tobacco).